Here is a 502-residue protein sequence, read N- to C-terminus: ATP synthase subunit alpha (502 aa).

An ATP-binding site is contributed by 169 to 176 (GDRQTGKT).

Belongs to the ATPase alpha/beta chains family. In terms of assembly, F-type ATPases have 2 components, CF(1) - the catalytic core - and CF(0) - the membrane proton channel. CF(1) has five subunits: alpha(3), beta(3), gamma(1), delta(1), epsilon(1). CF(0) has three main subunits: a(1), b(2) and c(9-12). The alpha and beta chains form an alternating ring which encloses part of the gamma chain. CF(1) is attached to CF(0) by a central stalk formed by the gamma and epsilon chains, while a peripheral stalk is formed by the delta and b chains.

Its subcellular location is the cell membrane. The catalysed reaction is ATP + H2O + 4 H(+)(in) = ADP + phosphate + 5 H(+)(out). In terms of biological role, produces ATP from ADP in the presence of a proton gradient across the membrane. The alpha chain is a regulatory subunit. In Clostridium perfringens (strain ATCC 13124 / DSM 756 / JCM 1290 / NCIMB 6125 / NCTC 8237 / Type A), this protein is ATP synthase subunit alpha.